A 191-amino-acid polypeptide reads, in one-letter code: Bcl-2-like protein 10 (191 aa).

The BH1 motif lies at 79-98 (LSKDQDFSWSQLVMLLAFAG). A Glycyl lysine isopeptide (Lys-Gly) (interchain with G-Cter in ubiquitin) cross-link involves residue K112. Positions 144-155 (RLEALGGWDGFC) match the BH2 motif. A helical transmembrane segment spans residues 166–183 (FWRRLLIQAFLSGFFATA).

This sequence belongs to the Bcl-2 family. As to quaternary structure, interacts with BAX. Interacts with BCL2 and BCL2L1/BCLX. Interacts with APAF1. Interacts with ITPR1, ITPR2 and ITPR3; the interaction with ITPR1 is increased in the presence of AHCLY1. Interacts with AHCYL1. Interacts with HIP1R (via ENTH and I/LWEQ domains). Interacts with CASP9. Interacts with BCL2L11/BIM. Interacts with BIK. Interacts with UBQLN4. Interacts with NME2/NM23-H2. Interacts with PMAIP1/NOXA. Interacts with TPX2. Interacts with UBQLN1; in the cytoplasm. Interacts (via BH1 domain) with BECN1. It depends on Ca(2+) as a cofactor. Post-translationally, monoubiquitinated by UBQLN1; results in stabilization of BCL2L10 protein abundance and in relocalization from mitochondria to cytoplasm. In terms of tissue distribution, expressed in multiple embryonic tissues. Restricted to the ovary and testis in adult mice.

Its subcellular location is the mitochondrion. It is found in the nucleus membrane. The protein resides in the endoplasmic reticulum. It localises to the cytoplasm. The protein localises to the cytoskeleton. Its subcellular location is the spindle. Promotes cell survival by suppressing apoptosis induced by BAX but not BAK. Increases binding of AHCYL1/IRBIT to ITPR1. Reduces ITPR1-mediated calcium release from the endoplasmic reticulum cooperatively with AHCYL1/IRBIT under normal cellular conditions. Under apoptotic stress conditions, dissociates from ITPR1 and is displaced from mitochondria-associated endoplasmic reticulum membranes, leading to increased Ca(2+) transfer to mitochondria which promotes apoptosis. Required for the correct formation of the microtubule organizing center during oocyte cell division, potentially via regulation of protein abundance and localization of other microtubule organizing center components such as AURKA and TPX2. The sequence is that of Bcl-2-like protein 10 from Mus musculus (Mouse).